Reading from the N-terminus, the 333-residue chain is Methionyl-tRNA formyltransferase (333 aa).

Position 106 to 109 (106 to 109) interacts with (6S)-5,6,7,8-tetrahydrofolate; sequence SLLP.

This sequence belongs to the Fmt family.

It carries out the reaction L-methionyl-tRNA(fMet) + (6R)-10-formyltetrahydrofolate = N-formyl-L-methionyl-tRNA(fMet) + (6S)-5,6,7,8-tetrahydrofolate + H(+). Functionally, attaches a formyl group to the free amino group of methionyl-tRNA(fMet). The formyl group appears to play a dual role in the initiator identity of N-formylmethionyl-tRNA by promoting its recognition by IF2 and preventing the misappropriation of this tRNA by the elongation apparatus. The sequence is that of Methionyl-tRNA formyltransferase from Elusimicrobium minutum (strain Pei191).